Reading from the N-terminus, the 560-residue chain is Ribonuclease J 1 (560 aa).

Residues His-76, His-78, Asp-80, His-81, His-144, and Asp-166 each contribute to the Zn(2+) site. 366–370 (HTSGH) lines the substrate pocket. His-392 is a Zn(2+) binding site.

This sequence belongs to the metallo-beta-lactamase superfamily. RNA-metabolizing metallo-beta-lactamase-like family. Bacterial RNase J subfamily. As to quaternary structure, homodimer, may be a subunit of the RNA degradosome. Zn(2+) serves as cofactor.

It is found in the cytoplasm. Its function is as follows. An RNase that has 5'-3' exonuclease and possibly endonuclease activity. Involved in maturation of rRNA and in some organisms also mRNA maturation and/or decay. Has an overlapping but not completely redundant role with RNase J2 in the decay of mRNA. This chain is Ribonuclease J 1, found in Streptococcus pyogenes serotype M3 (strain ATCC BAA-595 / MGAS315).